We begin with the raw amino-acid sequence, 110 residues long: Protein YcgL (110 aa).

Residues 14-98 (MFCVIYRSSK…PPEDLLKQHL (85 aa)) form the YcgL domain. A disordered region spans residues 88-110 (PPPEDLLKQHLSSVGQNTSHADR). Residues 97 to 110 (HLSSVGQNTSHADR) are compositionally biased toward polar residues.

In Salmonella schwarzengrund (strain CVM19633), this protein is Protein YcgL.